The sequence spans 32 residues: MSDIN-like toxin proprotein 2 (32 aa).

The propeptide occupies 1-10 (MSDINATRLP). Positions 11–17 (HLVRYPP) form a cross-link, cyclopeptide (His-Pro). A propeptide spanning residues 18 to 32 (YVGDGTDLTLNRGEK) is cleaved from the precursor.

This sequence belongs to the MSDIN fungal toxin family. Post-translationally, processed by the macrocyclase-peptidase enzyme POPB to yield a toxic cyclic heptapeptide. POPB first removes 10 residues from the N-terminus. Conformational trapping of the remaining peptide forces the enzyme to release this intermediate rather than proceed to macrocyclization. The enzyme rebinds the remaining peptide in a different conformation and catalyzes macrocyclization of the N-terminal 7 residues.

Its function is as follows. Probable toxin that belongs to the MSDIN-like toxin family responsible for a large number of food poisoning cases and deaths. This chain is MSDIN-like toxin proprotein 2, found in Amanita fuligineoides.